The sequence spans 1071 residues: SLIT-ROBO Rho GTPase-activating protein 2 (1071 aa).

The F-BAR domain occupies 22 to 325; it reads KEIRAQLTEQ…AVENLDATSD (304 aa). A compositionally biased stretch (basic and acidic residues) spans 181–203; it reads LKEAEKQEEKQIGKSVKQEDRQT. The tract at residues 181–211 is disordered; it reads LKEAEKQEEKQIGKSVKQEDRQTPRSPDSTA. The residue at position 206 (serine 206) is a Phosphoserine. Positions 363–401 form a coiled coil; that stretch reads QSELVQRCQQLQSRLSTLKIENEEVKKTMEATLQTIQDI. Phosphoserine is present on residues serine 427, serine 500, serine 691, and serine 695. Positions 489-679 constitute a Rho-GAP domain; that stretch reads ARRSSTVRKQ…TIIIQHENIF (191 aa). Positions 700–726 are disordered; it reads CDSTHGETTSAEDSTQDVTAEHHTSDD. Polar residues predominate over residues 705–717; that stretch reads GETTSAEDSTQDV. Position 724 is a phosphoserine (serine 724). The 60-residue stretch at 728–787 folds into the SH3 domain; sequence CEPIEAIAKFDYVGRTARELSFKKGASLLLYQRASDDWWEGRHNGIDGLIPHQYIVVQDT. Serine 795 is modified (phosphoserine). Disordered stretches follow at residues 795 to 819 and 838 to 918; these read SSPKSEIEVMSEPPEEKVTARTGAS and RKRP…DSPQ. The span at 855–868 shows a compositional bias: low complexity; that stretch reads HGLGSSLTDSSSLG. 2 stretches are compositionally biased toward polar residues: residues 874 to 885 and 897 to 907; these read RPSSQPIMSQNL and GHGSLNSISRH. The residue at position 916 (serine 916) is a Phosphoserine. Symmetric dimethylarginine; by PRMT5 is present on arginine 927. A Phosphoserine modification is found at serine 930. Residues 940–968 adopt a coiled-coil conformation; it reads EVIAQDIEATMNSALNELQELERQSSAKH. The tract at residues 984-1012 is disordered; that stretch reads PVVAPTSEPSSPLHTQLLKDPEPAFQRSA. 4 positions are modified to phosphoserine: serine 990, serine 994, serine 1013, and serine 1027. The disordered stretch occupies residues 1029 to 1071; that stretch reads KMAAPVKPPATRPKPTVFPKTNATSPGVNSSASPQATDKSCTV. The segment covering 1047-1071 has biased composition (polar residues); the sequence is PKTNATSPGVNSSASPQATDKSCTV.

Homodimer. Forms a heterooligomer with SRGAP1 and SRGAP3 through its F-BAR domain. Interacts (via SH3 domain) with GPHN. Interacts (via SH3 domain) with FMNL1 (activated by RAC1); regulates the actin filament severing activity of FMNL1 and actin dynamics. Interacts (via SH3 domain) with FMNL3. Interacts with RAC1; specifically stimulates RAC1 GTPase activity. Interacts (via F-BAR domain) with HOMER1. Interacts with ROBO1 and ROBO2. Interacts with FASLG. Interacts with PRMT5. Post-translationally, methylation at Arg-927 is required for the stimulation of cell migration, dimerization and localization at the plasma membrane protrusions.

The protein resides in the cell membrane. It localises to the cell projection. It is found in the dendritic spine. The protein localises to the postsynaptic density. Its subcellular location is the postsynaptic cell membrane. The protein resides in the lamellipodium. It localises to the cytoplasmic vesicle. It is found in the phagosome. The protein localises to the nucleus. Its subcellular location is the cytoplasm. The protein resides in the cytosol. Postsynaptic RAC1 GTPase activating protein (GAP) that plays a key role in neuronal morphogenesis and migration mainly during development of the cerebral cortex. Regulates excitatory and inhibitory synapse maturation and density in cortical pyramidal neurons. SRGAP2/SRGAP2A limits excitatory and inhibitory synapse density through its RAC1-specific GTPase activating activity, while it promotes maturation of both excitatory and inhibitory synapses through its ability to bind to the postsynaptic scaffolding protein HOMER1 at excitatory synapses, and the postsynaptic protein GPHN at inhibitory synapses. Mechanistically, acts by binding and deforming membranes, thereby regulating actin dynamics to regulate cell migration and differentiation. Promotes cell repulsion and contact inhibition of locomotion: localizes to protrusions with curved edges and controls the duration of RAC1 activity in contact protrusions. In non-neuronal cells, may also play a role in cell migration by regulating the formation of lamellipodia and filopodia. This chain is SLIT-ROBO Rho GTPase-activating protein 2, found in Mus musculus (Mouse).